The sequence spans 158 residues: 2-C-methyl-D-erythritol 2,4-cyclodiphosphate synthase (158 aa).

Positions 8 and 10 each coordinate a divalent metal cation. Residues 8–10 and 34–35 contribute to the 4-CDP-2-C-methyl-D-erythritol 2-phosphate site; these read DVH and HS. H42 is a binding site for a divalent metal cation. 4-CDP-2-C-methyl-D-erythritol 2-phosphate-binding positions include 56–58, 61–65, 100–106, 132–135, F139, and K142; these read DIG, FPDTD, AQKPKML, and TTEE.

This sequence belongs to the IspF family. As to quaternary structure, homotrimer. A divalent metal cation serves as cofactor.

The enzyme catalyses 4-CDP-2-C-methyl-D-erythritol 2-phosphate = 2-C-methyl-D-erythritol 2,4-cyclic diphosphate + CMP. It participates in isoprenoid biosynthesis; isopentenyl diphosphate biosynthesis via DXP pathway; isopentenyl diphosphate from 1-deoxy-D-xylulose 5-phosphate: step 4/6. Functionally, involved in the biosynthesis of isopentenyl diphosphate (IPP) and dimethylallyl diphosphate (DMAPP), two major building blocks of isoprenoid compounds. Catalyzes the conversion of 4-diphosphocytidyl-2-C-methyl-D-erythritol 2-phosphate (CDP-ME2P) to 2-C-methyl-D-erythritol 2,4-cyclodiphosphate (ME-CPP) with a corresponding release of cytidine 5-monophosphate (CMP). The polypeptide is 2-C-methyl-D-erythritol 2,4-cyclodiphosphate synthase (Clostridium tetani (strain Massachusetts / E88)).